Here is a 96-residue protein sequence, read N- to C-terminus: RNA-binding protein Hfq (96 aa).

In terms of domain architecture, Sm spans 9–68 (DPYLNALRRERIPVSIYLVNGIKLQGQIESFDQFVILLKNTVNQMVYKHAISTVVPARSV). Residues 65-96 (ARSVSHHNNPQQQQQHSQQTESAAPAAEPQAE) are disordered. The segment covering 70–96 (HHNNPQQQQQHSQQTESAAPAAEPQAE) has biased composition (low complexity).

This sequence belongs to the Hfq family. In terms of assembly, homohexamer.

Functionally, RNA chaperone that binds small regulatory RNA (sRNAs) and mRNAs to facilitate mRNA translational regulation in response to envelope stress, environmental stress and changes in metabolite concentrations. Also binds with high specificity to tRNAs. The sequence is that of RNA-binding protein Hfq from Mannheimia succiniciproducens (strain KCTC 0769BP / MBEL55E).